We begin with the raw amino-acid sequence, 199 residues long: MENFRKVRSEEAPAGDGDEGGSPSSGPFADLAPGAVHMRVKEGSKIRNLLAFATASMAQPATRAIVFSGCGRATTKTVTCAEILKRRLAGLHQVTRLRYRSVREVWQSLPPGPTPGQTPSDPAASLSVLKNVPSLAILLSKDALDPRQLGYQPPNLSPGPSSPPTVSTSKRSLGESAAGEGTAKRSQPEPEAENEDRTA.

Over residues 1 to 11 (MENFRKVRSEE) the composition is skewed to basic and acidic residues. Disordered stretches follow at residues 1 to 31 (MENF…FADL) and 146 to 199 (PRQL…DRTA). Ser172 carries the post-translational modification Phosphoserine. Positions 190-199 (PEAENEDRTA) are enriched in acidic residues.

Belongs to the histone-like Alba family. As to quaternary structure, component of nuclear RNase P and RNase MRP ribonucleoproteins. RNase P consists of a catalytic RNA moiety and 10 different protein chains; POP1, POP4, POP5, POP7, RPP14, RPP21, RPP25, RPP30, RPP38 and RPP40. Within the RNase P complex, POP1, POP7 and RPP25 form the 'finger' subcomplex, POP5, RPP14, RPP40 and homodimeric RPP30 form the 'palm' subcomplex, and RPP21, POP4 and RPP38 form the 'wrist' subcomplex. All subunits of the RNase P complex interact with the catalytic RNA. Several subunits of RNase P are also part of the RNase MRP complex. RNase MRP consists of a catalytic RNA moiety and about 8 protein subunits; POP1, POP7, RPP25, RPP30, RPP38, RPP40 and possibly also POP4 and POP5. POP7 forms a heterodimer with RPP25 that binds to the P3 stem loop of the catalytic RNA.

The protein localises to the nucleus. It localises to the nucleolus. Its function is as follows. Component of ribonuclease P, a ribonucleoprotein complex that generates mature tRNA molecules by cleaving their 5'-ends. Also a component of the MRP ribonuclease complex, which cleaves pre-rRNA sequences. The sequence is that of Ribonuclease P protein subunit p25 (Rpp25) from Rattus norvegicus (Rat).